The sequence spans 359 residues: 3-dehydroquinate synthase (359 aa).

NAD(+) is bound by residues 105-109 (GVVGD), 129-130 (TT), K142, K151, and 169-172 (TIKT). Zn(2+)-binding residues include E184, H247, and H263.

It belongs to the sugar phosphate cyclases superfamily. Dehydroquinate synthase family. Co(2+) is required as a cofactor. Requires Zn(2+) as cofactor. It depends on NAD(+) as a cofactor.

The protein localises to the cytoplasm. The enzyme catalyses 7-phospho-2-dehydro-3-deoxy-D-arabino-heptonate = 3-dehydroquinate + phosphate. Its pathway is metabolic intermediate biosynthesis; chorismate biosynthesis; chorismate from D-erythrose 4-phosphate and phosphoenolpyruvate: step 2/7. Functionally, catalyzes the conversion of 3-deoxy-D-arabino-heptulosonate 7-phosphate (DAHP) to dehydroquinate (DHQ). The chain is 3-dehydroquinate synthase from Ruminiclostridium cellulolyticum (strain ATCC 35319 / DSM 5812 / JCM 6584 / H10) (Clostridium cellulolyticum).